We begin with the raw amino-acid sequence, 562 residues long: Dihydroxy-acid dehydratase (562 aa).

D80 serves as a coordination point for Mg(2+). A [2Fe-2S] cluster-binding site is contributed by C121. The Mg(2+) site is built by D122 and K123. Position 123 is an N6-carboxylysine (K123). [2Fe-2S] cluster is bound at residue C194. E446 contributes to the Mg(2+) binding site. The active-site Proton acceptor is S472.

Belongs to the IlvD/Edd family. Homodimer. Requires [2Fe-2S] cluster as cofactor. Mg(2+) is required as a cofactor.

It carries out the reaction (2R)-2,3-dihydroxy-3-methylbutanoate = 3-methyl-2-oxobutanoate + H2O. The enzyme catalyses (2R,3R)-2,3-dihydroxy-3-methylpentanoate = (S)-3-methyl-2-oxopentanoate + H2O. Its pathway is amino-acid biosynthesis; L-isoleucine biosynthesis; L-isoleucine from 2-oxobutanoate: step 3/4. It functions in the pathway amino-acid biosynthesis; L-valine biosynthesis; L-valine from pyruvate: step 3/4. In terms of biological role, functions in the biosynthesis of branched-chain amino acids. Catalyzes the dehydration of (2R,3R)-2,3-dihydroxy-3-methylpentanoate (2,3-dihydroxy-3-methylvalerate) into 2-oxo-3-methylpentanoate (2-oxo-3-methylvalerate) and of (2R)-2,3-dihydroxy-3-methylbutanoate (2,3-dihydroxyisovalerate) into 2-oxo-3-methylbutanoate (2-oxoisovalerate), the penultimate precursor to L-isoleucine and L-valine, respectively. The chain is Dihydroxy-acid dehydratase from Staphylococcus aureus (strain bovine RF122 / ET3-1).